The sequence spans 266 residues: Tryptophan synthase alpha chain (266 aa).

Active-site proton acceptor residues include Glu-52 and Asp-63.

It belongs to the TrpA family. In terms of assembly, tetramer of two alpha and two beta chains.

It carries out the reaction (1S,2R)-1-C-(indol-3-yl)glycerol 3-phosphate + L-serine = D-glyceraldehyde 3-phosphate + L-tryptophan + H2O. It functions in the pathway amino-acid biosynthesis; L-tryptophan biosynthesis; L-tryptophan from chorismate: step 5/5. Functionally, the alpha subunit is responsible for the aldol cleavage of indoleglycerol phosphate to indole and glyceraldehyde 3-phosphate. The polypeptide is Tryptophan synthase alpha chain (Nocardia farcinica (strain IFM 10152)).